The chain runs to 228 residues: uncharacterized protein (228 aa).

Positions Leu-99–Ile-207 constitute a tRNA-binding domain.

This is an uncharacterized protein from Mycoplasma genitalium (strain ATCC 33530 / DSM 19775 / NCTC 10195 / G37) (Mycoplasmoides genitalium).